The chain runs to 208 residues: Rac-like GTP-binding protein ARAC8 (208 aa).

15 to 22 (GDGAVGKT) serves as a coordination point for GTP. An Effector region motif is present at residues 37–45 (YIPTVFDNF). GTP contacts are provided by residues 62–66 (DTAGQ) and 120–123 (TKMD). S-palmitoyl cysteine attachment occurs at residues cysteine 199 and cysteine 205.

This sequence belongs to the small GTPase superfamily. Rho family. As to quaternary structure, interacts with ICR1. Binds to SPK1. In terms of processing, although this sequence has a C-terminal -CXXX, it is palmitoylated at Cys-205, rather than prenylated.

The protein localises to the membrane. Its function is as follows. Acts as a negative regulator of abscisic acid (ABA) responses. This is Rac-like GTP-binding protein ARAC8 (ARAC8) from Arabidopsis thaliana (Mouse-ear cress).